The chain runs to 393 residues: NAD(P)H-quinone oxidoreductase subunit H, chloroplastic (393 aa).

It belongs to the complex I 49 kDa subunit family. NDH is composed of at least 16 different subunits, 5 of which are encoded in the nucleus.

The protein localises to the plastid. Its subcellular location is the chloroplast thylakoid membrane. The enzyme catalyses a plastoquinone + NADH + (n+1) H(+)(in) = a plastoquinol + NAD(+) + n H(+)(out). It catalyses the reaction a plastoquinone + NADPH + (n+1) H(+)(in) = a plastoquinol + NADP(+) + n H(+)(out). In terms of biological role, NDH shuttles electrons from NAD(P)H:plastoquinone, via FMN and iron-sulfur (Fe-S) centers, to quinones in the photosynthetic chain and possibly in a chloroplast respiratory chain. The immediate electron acceptor for the enzyme in this species is believed to be plastoquinone. Couples the redox reaction to proton translocation, and thus conserves the redox energy in a proton gradient. This Cryptomeria japonica (Japanese cedar) protein is NAD(P)H-quinone oxidoreductase subunit H, chloroplastic.